The primary structure comprises 192 residues: uncharacterized protein (192 aa).

Residues Q29–D160 enclose the Nudix hydrolase domain. The short motif at G67–A89 is the Nudix box element. The Mg(2+) site is built by E83 and E87.

The protein belongs to the Nudix hydrolase family. PCD1 subfamily. Mn(2+) serves as cofactor. Mg(2+) is required as a cofactor.

In terms of biological role, probably mediates the hydrolysis of some nucleoside diphosphate derivatives. This is an uncharacterized protein from Klebsiella pneumoniae subsp. pneumoniae (strain ATCC 700721 / MGH 78578).